A 66-amino-acid polypeptide reads, in one-letter code: Surface composition regulator (66 aa).

This sequence belongs to the GlgS family.

Functionally, major determinant of cell surface composition. Negatively regulates motility, adhesion and synthesis of biofilm exopolysaccharides. The polypeptide is Surface composition regulator (Shigella dysenteriae serotype 1 (strain Sd197)).